The primary structure comprises 280 residues: Nucleotide-binding protein Mfla_0145 (280 aa).

8 to 15 provides a ligand contact to ATP; the sequence is GLSGSGKS. A GTP-binding site is contributed by 57–60; the sequence is DTRS.

It belongs to the RapZ-like family.

In terms of biological role, displays ATPase and GTPase activities. The polypeptide is Nucleotide-binding protein Mfla_0145 (Methylobacillus flagellatus (strain ATCC 51484 / DSM 6875 / VKM B-1610 / KT)).